The primary structure comprises 347 residues: DNA-directed RNA polymerase subunit alpha (347 aa).

The tract at residues 1–243 is alpha N-terminal domain (alpha-NTD); the sequence is MLIKQGDRLI…DQISVFINFD (243 aa). The tract at residues 260-347 is alpha C-terminal domain (alpha-CTD); it reads FNEHLFKSID…EWKRKQQHEA (88 aa).

Belongs to the RNA polymerase alpha chain family. Homodimer. The RNAP catalytic core consists of 2 alpha, 1 beta, 1 beta' and 1 omega subunit. When a sigma factor is associated with the core the holoenzyme is formed, which can initiate transcription.

The enzyme catalyses RNA(n) + a ribonucleoside 5'-triphosphate = RNA(n+1) + diphosphate. Functionally, DNA-dependent RNA polymerase catalyzes the transcription of DNA into RNA using the four ribonucleoside triphosphates as substrates. The chain is DNA-directed RNA polymerase subunit alpha from Nitratidesulfovibrio vulgaris (strain ATCC 29579 / DSM 644 / CCUG 34227 / NCIMB 8303 / VKM B-1760 / Hildenborough) (Desulfovibrio vulgaris).